A 1017-amino-acid polypeptide reads, in one-letter code: Nonsense-mediated mRNA decay factor SMG5 (1017 aa).

At Ser-2 the chain carries N-acetylserine. Residues Ser-2 and Ser-423 each carry the phosphoserine modification. 2 disordered regions span residues 406 to 562 (GENP…PSEA) and 597 to 640 (TEPN…CRNE). Over residues 448 to 467 (KSRKHSRLSCLRRRRRHHPP) the composition is skewed to basic residues. Over residues 486 to 496 (DSAQASDGSDS) the composition is skewed to low complexity. Positions 620-629 (ASEDGSESEG) are enriched in acidic residues. Positions 798 to 842 (AQSEQESLLQQAQAQFRMAEEEARRNRLMRDMAQLRLQLEVSQLE) form a coiled coil. The 124-residue stretch at 873–996 (RQLATSGRFI…GPMQAALQAA (124 aa)) folds into the PINc domain.

In terms of assembly, interacts with TERT, PPP2CA and SMG1. Part of a complex that contains SMG1, SMG5, SMG7, PPP2CA, a short isoform of UPF3A (isoform UPF3AS, but not isoform UPF3AL) and phosphorylated UPF1. Not detected in complexes that contain unphosphorylated UPF1.

The protein resides in the cytoplasm. It is found in the nucleus. Plays a role in nonsense-mediated mRNA decay. Does not have RNase activity by itself. Promotes dephosphorylation of UPF1. Together with SMG7 is thought to provide a link to the mRNA degradation machinery involving exonucleolytic pathways, and to serve as an adapter for UPF1 to protein phosphatase 2A (PP2A), thereby triggering UPF1 dephosphorylation. Necessary for TERT activity. This Mus musculus (Mouse) protein is Nonsense-mediated mRNA decay factor SMG5.